A 949-amino-acid polypeptide reads, in one-letter code: Valine--tRNA ligase (949 aa).

Residues 40-50 (PNVTGSLHMGH) carry the 'HIGH' region motif. A 'KMSKS' region motif is present at residues 553–557 (KMSKS). K556 is an ATP binding site. Positions 877 to 949 (MAGLIDKEAE…QEQQDKIKAL (73 aa)) form a coiled coil.

Belongs to the class-I aminoacyl-tRNA synthetase family. ValS type 1 subfamily. Monomer.

Its subcellular location is the cytoplasm. It carries out the reaction tRNA(Val) + L-valine + ATP = L-valyl-tRNA(Val) + AMP + diphosphate. In terms of biological role, catalyzes the attachment of valine to tRNA(Val). As ValRS can inadvertently accommodate and process structurally similar amino acids such as threonine, to avoid such errors, it has a 'posttransfer' editing activity that hydrolyzes mischarged Thr-tRNA(Val) in a tRNA-dependent manner. The chain is Valine--tRNA ligase from Idiomarina loihiensis (strain ATCC BAA-735 / DSM 15497 / L2-TR).